The following is a 1680-amino-acid chain: GRIP and coiled-coil domain-containing protein 2 (1680 aa).

Met-1 carries the post-translational modification N-acetylmethionine. The span at 1–14 (MEDSAPDAVAAAPS) shows a compositional bias: low complexity. Disordered regions lie at residues 1 to 23 (MEDS…KLET) and 1468 to 1522 (KSEP…SSAG). Residues 31-1614 (KFAKKQMMLL…REKSVANLEY (1584 aa)) are a coiled coil. Residues 1469–1484 (SEPSTRSPASSHQPSK) show a composition bias toward polar residues. Phosphoserine is present on residues Ser-1475 and Ser-1479. Positions 1570-1609 (HLNGLLRETEATNAILMEQIKLLKSEIRRLERNQEREKSV) are mediates interaction with RAB6A. A mediates interaction with RAB9A region spans residues 1570-1680 (HLNGLLRETE…SYLHSWSGLR (111 aa)). The GRIP domain occupies 1605–1655 (REKSVANLEYLKNVLLRFIFLKPGSERERLLPVIDTMLQLSPEEKGKLATV).

In terms of assembly, homodimer. Interacts (via GRIP domain) with RAB6A (preferentially in its GTP-bound form). May interact (RAB6A-dependent) with ARL1; might be involved in GCC2 Golgi localization. Interacts (probably via GRIP domain) with RAB9A (preferentially in its GTP-bound form). Interacts with CLASP1 and CLASP2; recruits both proteins to membranes of the TGN. Interacts with STX16.

It localises to the cytoplasm. Its subcellular location is the golgi apparatus. The protein localises to the trans-Golgi network membrane. In terms of biological role, golgin which probably tethers transport vesicles to the trans-Golgi network (TGN) and regulates vesicular transport between the endosomes and the Golgi. As a RAB9A effector it is involved in recycling of the mannose 6-phosphate receptor from the late endosomes to the TGN. May also play a role in transport between the recycling endosomes and the Golgi. Required for maintenance of the Golgi structure, it is involved in the biogenesis of noncentrosomal, Golgi-associated microtubules through recruitment of CLASP1 and CLASP2. The sequence is that of GRIP and coiled-coil domain-containing protein 2 (Gcc2) from Mus musculus (Mouse).